The primary structure comprises 68 residues: Large ribosomal subunit protein uL29 (68 aa).

Belongs to the universal ribosomal protein uL29 family.

In Prochlorococcus marinus (strain SARG / CCMP1375 / SS120), this protein is Large ribosomal subunit protein uL29.